The chain runs to 468 residues: 3-isopropylmalate dehydratase large subunit (468 aa).

[4Fe-4S] cluster contacts are provided by Cys-349, Cys-409, and Cys-412.

It belongs to the aconitase/IPM isomerase family. LeuC type 1 subfamily. As to quaternary structure, heterodimer of LeuC and LeuD. [4Fe-4S] cluster is required as a cofactor.

It carries out the reaction (2R,3S)-3-isopropylmalate = (2S)-2-isopropylmalate. The protein operates within amino-acid biosynthesis; L-leucine biosynthesis; L-leucine from 3-methyl-2-oxobutanoate: step 2/4. Catalyzes the isomerization between 2-isopropylmalate and 3-isopropylmalate, via the formation of 2-isopropylmaleate. This Shewanella baltica (strain OS155 / ATCC BAA-1091) protein is 3-isopropylmalate dehydratase large subunit.